Consider the following 85-residue polypeptide: SPbeta prophage-derived uncharacterized protein YoqG (85 aa).

This chain is SPbeta prophage-derived uncharacterized protein YoqG (yoqG), found in Bacillus subtilis (strain 168).